The primary structure comprises 543 residues: Ipecac alkaloid beta-glucosidase 3 (543 aa).

A beta-D-glucoside-binding positions include glutamine 36, histidine 140, 185 to 186 (NE), tyrosine 350, glutamate 422, tryptophan 471, and phenylalanine 487. The active-site Proton donor is the glutamate 186. The active-site Nucleophile is the glutamate 422.

Belongs to the glycosyl hydrolase 1 family.

Its subcellular location is the cytoplasm. It is found in the cytosol. The catalysed reaction is deacetylipecoside + H2O = deacetylipecoside aglycone + D-glucose. The enzyme catalyses deacetylisoipecoside + H2O = deacetylisoipecoside aglycone + D-glucose. Its pathway is alkaloid biosynthesis. In terms of biological role, beta-glucosidase catalyzing deglucosylation on N-deacetylisoipecoside and N-deacetylipecoside. This is Ipecac alkaloid beta-glucosidase 3 from Carapichea ipecacuanha (Ipecac).